Here is a 235-residue protein sequence, read N- to C-terminus: 2-C-methyl-D-erythritol 4-phosphate cytidylyltransferase (235 aa).

The protein belongs to the IspD/TarI cytidylyltransferase family. IspD subfamily.

It catalyses the reaction 2-C-methyl-D-erythritol 4-phosphate + CTP + H(+) = 4-CDP-2-C-methyl-D-erythritol + diphosphate. The protein operates within isoprenoid biosynthesis; isopentenyl diphosphate biosynthesis via DXP pathway; isopentenyl diphosphate from 1-deoxy-D-xylulose 5-phosphate: step 2/6. Catalyzes the formation of 4-diphosphocytidyl-2-C-methyl-D-erythritol from CTP and 2-C-methyl-D-erythritol 4-phosphate (MEP). This chain is 2-C-methyl-D-erythritol 4-phosphate cytidylyltransferase, found in Pseudomonas fluorescens (strain ATCC BAA-477 / NRRL B-23932 / Pf-5).